The sequence spans 349 residues: Alanine racemase (349 aa).

Lys-35 serves as the catalytic Proton acceptor; specific for D-alanine. Lys-35 carries the post-translational modification N6-(pyridoxal phosphate)lysine. Arg-130 is a substrate binding site. Tyr-244 functions as the Proton acceptor; specific for L-alanine in the catalytic mechanism. Residue Met-292 participates in substrate binding.

Belongs to the alanine racemase family. Requires pyridoxal 5'-phosphate as cofactor.

It catalyses the reaction L-alanine = D-alanine. It functions in the pathway amino-acid biosynthesis; D-alanine biosynthesis; D-alanine from L-alanine: step 1/1. Catalyzes the interconversion of L-alanine and D-alanine. May also act on other amino acids. The sequence is that of Alanine racemase (alr) from Dinoroseobacter shibae (strain DSM 16493 / NCIMB 14021 / DFL 12).